We begin with the raw amino-acid sequence, 138 residues long: Acidic phospholipase A2 Cvv-E6e (138 aa).

The first 16 residues, 1–16, serve as a signal peptide directing secretion; the sequence is MRTLWILAVLLLGVEG. Cystine bridges form between cysteine 42–cysteine 131, cysteine 44–cysteine 60, cysteine 59–cysteine 111, cysteine 65–cysteine 138, cysteine 66–cysteine 104, cysteine 73–cysteine 97, and cysteine 91–cysteine 102. Ca(2+) contacts are provided by tyrosine 43, glycine 45, and glycine 47. The active site involves histidine 63. A Ca(2+)-binding site is contributed by aspartate 64. Aspartate 105 is a catalytic residue.

The cofactor is Ca(2+). Expressed by the venom gland.

The protein resides in the secreted. The catalysed reaction is a 1,2-diacyl-sn-glycero-3-phosphocholine + H2O = a 1-acyl-sn-glycero-3-phosphocholine + a fatty acid + H(+). Functionally, snake venom phospholipase A2 (PLA2) that significantly inhibits ADP-induced platelet aggregation in platelet-rich plasma of human, rabbit and guinea pig. PLA2 catalyzes the calcium-dependent hydrolysis of the 2-acyl groups in 3-sn-phosphoglycerides. This chain is Acidic phospholipase A2 Cvv-E6e, found in Crotalus viridis viridis (Prairie rattlesnake).